Reading from the N-terminus, the 355-residue chain is Cyclic nucleotide-gated potassium channel mll3241 (355 aa).

Residues 1–12 (MSVLPFLRIYAP) are Cytoplasmic-facing. A helical membrane pass occupies residues 13–30 (LNAVLAAPGLLAVAALTI). Topologically, residues 31 to 38 (PDMSGRSR) are periplasmic. A helical membrane pass occupies residues 39–61 (LALAALLAVIWGAYLLQLAATLL). Residues 62–74 (KRRAGVVRDRTPK) lie on the Cytoplasmic side of the membrane. Residues 75 to 94 (IAIDVLAVLVPLAAFLLDGS) traverse the membrane as a helical segment. The chain crosses the membrane as a helical span at residues 95-112 (PDWSLYCAVWLLKPLRDS). Topologically, residues 113-129 (TFFPVLGRVLANEARNL) are cytoplasmic. A helical membrane pass occupies residues 130–150 (IGVTTLFGVVLFAVALAAYVI). At 151–161 (ERDIQPEKFGS) the chain is on the periplasmic side. Positions 162–180 (IPQAMWWAVVTLSTTGYGD) form an intramembrane region, pore-forming. Positions 175 to 180 (TTGYGD) match the Selectivity filter motif. Residues 181 to 185 (TIPQS) lie on the Periplasmic side of the membrane. Residues 186–210 (FAGRVLAGAVMMSGIGIFGLWAGIL) traverse the membrane as a helical segment. The Cytoplasmic segment spans residues 211-355 (ATGFYQEVRR…LERRGAAASA (145 aa)). Residues 297–298 (GE), 307–308 (RS), and R348 contribute to the 3',5'-cyclic AMP site.

Belongs to the potassium channel family. As to quaternary structure, homotetramer.

The protein localises to the cell membrane. Functionally, cyclic nucleotide-regulated potassium channel activated by cAMP. The sequence is that of Cyclic nucleotide-gated potassium channel mll3241 from Mesorhizobium japonicum (strain LMG 29417 / CECT 9101 / MAFF 303099) (Mesorhizobium loti (strain MAFF 303099)).